Here is an 83-residue protein sequence, read N- to C-terminus: Large ribosomal subunit protein bL31B (83 aa).

This sequence belongs to the bacterial ribosomal protein bL31 family. Type B subfamily. Part of the 50S ribosomal subunit.

The polypeptide is Large ribosomal subunit protein bL31B (Leifsonia xyli subsp. xyli (strain CTCB07)).